Reading from the N-terminus, the 686-residue chain is DNA ligase (686 aa).

NAD(+)-binding positions include aspartate 45–aspartate 49, serine 94–leucine 95, and glutamate 127. Lysine 129 functions as the N6-AMP-lysine intermediate in the catalytic mechanism. NAD(+) is bound by residues arginine 150, glutamate 187, lysine 302, and lysine 326. Residues cysteine 420, cysteine 423, cysteine 438, and cysteine 444 each contribute to the Zn(2+) site. The BRCT domain occupies leucine 605–serine 686.

It belongs to the NAD-dependent DNA ligase family. LigA subfamily. Mg(2+) is required as a cofactor. Requires Mn(2+) as cofactor.

It carries out the reaction NAD(+) + (deoxyribonucleotide)n-3'-hydroxyl + 5'-phospho-(deoxyribonucleotide)m = (deoxyribonucleotide)n+m + AMP + beta-nicotinamide D-nucleotide.. DNA ligase that catalyzes the formation of phosphodiester linkages between 5'-phosphoryl and 3'-hydroxyl groups in double-stranded DNA using NAD as a coenzyme and as the energy source for the reaction. It is essential for DNA replication and repair of damaged DNA. The chain is DNA ligase from Psychrobacter sp. (strain PRwf-1).